The primary structure comprises 568 residues: Proline--tRNA ligase (568 aa).

This sequence belongs to the class-II aminoacyl-tRNA synthetase family. ProS type 1 subfamily. As to quaternary structure, homodimer.

Its subcellular location is the cytoplasm. The enzyme catalyses tRNA(Pro) + L-proline + ATP = L-prolyl-tRNA(Pro) + AMP + diphosphate. Functionally, catalyzes the attachment of proline to tRNA(Pro) in a two-step reaction: proline is first activated by ATP to form Pro-AMP and then transferred to the acceptor end of tRNA(Pro). As ProRS can inadvertently accommodate and process non-cognate amino acids such as alanine and cysteine, to avoid such errors it has two additional distinct editing activities against alanine. One activity is designated as 'pretransfer' editing and involves the tRNA(Pro)-independent hydrolysis of activated Ala-AMP. The other activity is designated 'posttransfer' editing and involves deacylation of mischarged Ala-tRNA(Pro). The misacylated Cys-tRNA(Pro) is not edited by ProRS. The protein is Proline--tRNA ligase of Lysinibacillus sphaericus (strain C3-41).